We begin with the raw amino-acid sequence, 166 residues long: Biotin carboxyl carrier protein of acetyl-CoA carboxylase (166 aa).

Positions 61 to 70 (STASEASSPA) are enriched in polar residues. A disordered region spans residues 61 to 82 (STASEASSPASVKDVPVEEQPQ). Residues 90–166 (GDIVESPLVG…EFGQGLVRIK (77 aa)) form the Biotinyl-binding domain. At Lys-132 the chain carries N6-biotinyllysine.

In terms of assembly, homodimer.

Its pathway is lipid metabolism; fatty acid biosynthesis. In terms of biological role, this protein is a component of the acetyl coenzyme A carboxylase complex; first, biotin carboxylase catalyzes the carboxylation of the carrier protein and then the transcarboxylase transfers the carboxyl group to form malonyl-CoA. This Streptococcus pyogenes serotype M6 (strain ATCC BAA-946 / MGAS10394) protein is Biotin carboxyl carrier protein of acetyl-CoA carboxylase.